A 1325-amino-acid chain; its full sequence is Zinc finger MYM-type protein 6 (1325 aa).

MYM-type zinc fingers lie at residues 113–151 (QLFC…PKDV), 163–206 (KDFC…RFEV), 213–248 (HGLC…SSGP), 296–334 (ELFC…QYHL), 342–443 (YSFC…KPEL), 451–485 (FLFC…KETV), 492–531 (KPFC…LVEN), and 538–572 (EEFC…SESI). Ser-397 carries the phosphoserine modification. Residues 665–733 (ESTQEDAMKF…NDAELDSPPS (69 aa)) are disordered. Over residues 695–706 (PVTQTKATSCKP) the composition is skewed to polar residues.

As to expression, expressed at high levels in heart, skeletal muscle, kidney and liver.

It is found in the nucleus. In terms of biological role, plays a role in the regulation of cell morphology and cytoskeletal organization. This is Zinc finger MYM-type protein 6 (ZMYM6) from Homo sapiens (Human).